The primary structure comprises 442 residues: F-box/kelch-repeat protein OR23 (442 aa).

Residues 37-84 (TLIPGLSNDVGRLILSFVPYPHISRIKSTCKSWYAFLSSKTLISLRHS) form the F-box domain. 6 Kelch repeats span residues 93-139 (LSHL…NFVA), 145-200 (YVYV…AMPG), 204-257 (RIIV…LVEN), 269-328 (EFWV…KIVA), 330-377 (DCGK…ALNG), and 390-437 (LMDT…TTVM).

In Arabidopsis thaliana (Mouse-ear cress), this protein is F-box/kelch-repeat protein OR23 (OR23).